A 190-amino-acid chain; its full sequence is Frizzled-6 (190 aa).

Residues 1-20 (FGFAWPEELECSRLVNCDET) form the FZ domain. Over 1–89 (FGFAWPEELE…NYELDVAKSF (89 aa)) the chain is Extracellular. A helical membrane pass occupies residues 90–110 (IGIVSIFCLCATLFTFLTFLI). Topologically, residues 111-121 (DVKRFRYPERP) are cytoplasmic. Residues 122–142 (IIYYSVCYSIVSLMYFIGFLL) form a helical membrane-spanning segment. The Extracellular portion of the chain corresponds to 143 to 169 (GNRTACNKADDKLEIGETVVLGSQNKA). N144 carries an N-linked (GlcNAc...) asparagine glycan. A helical membrane pass occupies residues 170–190 (CTVLFMVLYFFTMAGTIWWVI).

This sequence belongs to the G-protein coupled receptor Fz/Smo family.

It is found in the membrane. It localises to the cell membrane. The protein localises to the cell surface. Its subcellular location is the apical cell membrane. The protein resides in the cytoplasmic vesicle membrane. Its function is as follows. Receptor for Wnt proteins. Most of frizzled receptors are coupled to the beta-catenin canonical signaling pathway, which leads to the activation of disheveled proteins, inhibition of GSK-3 kinase, nuclear accumulation of beta-catenin and activation of Wnt target genes. A second signaling pathway involving PKC and calcium fluxes has been seen for some family members, but it is not yet clear if it represents a distinct pathway or if it can be integrated in the canonical pathway, as PKC seems to be required for Wnt-mediated inactivation of GSK-3 kinase. Both pathways seem to involve interactions with G-proteins. Activation by Wnt5A stimulates PKC activity via a G-protein-dependent mechanism. Involved in transduction and intercellular transmission of polarity information during tissue morphogenesis and/or in differentiated tissues. Together with FZD3, may be involved in the neural tube closure and plays a role in the regulation of the establishment of planar cell polarity (PCP), particularly in the orientation of asymmetric bundles of stereocilia on the apical faces of a subset of auditory and vestibular sensory cells located in the inner ear. In Gallus gallus (Chicken), this protein is Frizzled-6 (FZD6).